The following is a 334-amino-acid chain: MGSIGSMGKPIEGFLVAAIQFPVPIVNSRKDIDHNIESIIRTLHATKAGYPGVELIIFPEYSTQGLNTAKWLSEEFLLDVPGKETEAYAQACKEAKVYGVFSIMERNPDSNKNPYNTAIIIDPQGKIILKYRKLFPWNPIEPWYPGDLGMPVCEGPGGSKLAVCICHDGMIPELAREAAYKGCNVYIRISGYSTQVNDQWILTNRSNAWHNLMYTVSVNLAGYDNVFYYFGEGQICNFDGTTLVQGHRNPWEIVTGEIYPKMADNARLSWGLENNIYNLGHRGYVAKPGGEHDAGLTYIKDLAAGKYKLPWEDHMKIKDGSIYGYPTTGGRFGK.

Residues 14–260 (FLVAAIQFPV…WEIVTGEIYP (247 aa)) form the CN hydrolase domain. Catalysis depends on Glu60, which acts as the Proton acceptor. Residue Lys133 is the Proton donor of the active site. The active-site Nucleophile is Cys166.

The protein belongs to the carbon-nitrogen hydrolase superfamily. Aliphatic amidase family.

It carries out the reaction formamide + H2O = formate + NH4(+). Functionally, is an aliphatic amidase with a restricted substrate specificity, as it only hydrolyzes formamide. This Helicobacter pylori (strain P12) protein is Formamidase.